Consider the following 419-residue polypeptide: L-rhamnose isomerase (419 aa).

Mn(2+) is bound by residues histidine 262, aspartate 294, and aspartate 296.

This sequence belongs to the rhamnose isomerase family. In terms of assembly, homotetramer. Mn(2+) serves as cofactor.

It is found in the cytoplasm. The enzyme catalyses L-rhamnopyranose = L-rhamnulose. Its pathway is carbohydrate degradation; L-rhamnose degradation; glycerone phosphate from L-rhamnose: step 1/3. In terms of biological role, catalyzes the interconversion of L-rhamnose and L-rhamnulose. This is L-rhamnose isomerase from Escherichia coli (strain SMS-3-5 / SECEC).